Consider the following 160-residue polypeptide: Small ribosomal subunit protein uS19v (160 aa).

Belongs to the universal ribosomal protein uS19 family.

It localises to the cytoplasm. The chain is Small ribosomal subunit protein uS19v (RPS15F) from Arabidopsis thaliana (Mouse-ear cress).